We begin with the raw amino-acid sequence, 333 residues long: PDZ domain-containing protein GIPC1 (333 aa).

Residues 1–11 (MPLGLGRRKKA) show a composition bias toward basic residues. The segment at 1–55 (MPLGLGRRKKAPPLVENEEAEPSRSGLGVGEPGPLGGSGAGESQMGLPPPPASLR) is disordered. Positions 27–40 (LGVGEPGPLGGSGA) are enriched in gly residues. Ser68 bears the Phosphoserine mark. In terms of domain architecture, PDZ spans 133-213 (EVEVFKSEDA…GRTFTLKLTE (81 aa)). The interval 221 to 244 (ISQRSSGGHPGSGPQLGTGRGTLR) is disordered. Phosphoserine occurs at positions 222, 225, and 232. Gly residues predominate over residues 228 to 240 (GHPGSGPQLGTGR). Thr242 carries the post-translational modification Phosphothreonine. Position 247 is a phosphoserine (Ser247).

This sequence belongs to the GIPC family. In terms of assembly, interacts with SDC4/syndecan-4 and SEMA4C/semaphorin-4C. Interacts with RGS19 (C-terminus), GLUT1 (C-terminus), ACTN1, KIF1B, MYO6 and PLEKHG5. As to expression, widely expressed.

It is found in the cytoplasm. Its subcellular location is the membrane. Its function is as follows. May be involved in G protein-linked signaling. The chain is PDZ domain-containing protein GIPC1 (Gipc1) from Rattus norvegicus (Rat).